The chain runs to 481 residues: Flavonol 3-O-glucosyltransferase UGT71C1 (481 aa).

Histidine 19 (proton acceptor) is an active-site residue. Position 19 (histidine 19) interacts with an anthocyanidin. The active-site Charge relay is aspartate 131. Threonine 153, alanine 352, glutamine 354, histidine 369, tryptophan 372, asparagine 373, serine 374, and glutamate 377 together coordinate UDP-alpha-D-glucose. Alanine 392 contacts an anthocyanidin. Glutamate 393 and glutamine 394 together coordinate UDP-alpha-D-glucose.

This sequence belongs to the UDP-glycosyltransferase family.

It carries out the reaction a flavonol + UDP-alpha-D-glucose = a flavonol 3-O-beta-D-glucoside + UDP + H(+). It catalyses the reaction a 7-O-hydroxy-flavonol + UDP-alpha-D-glucose = a flavonol 7-O-beta-D-glucoside + UDP + H(+). Possesses quercetin 7-O-glucosyltransferase and 3'-O-glucosyltransferase activities in vitro. Also active in vitro on benzoates and benzoate derivatives. Glucosylates other secondary metabolites in vitro like trans-resveratrol, curcumin, vanillin and etoposide. The chain is Flavonol 3-O-glucosyltransferase UGT71C1 from Arabidopsis thaliana (Mouse-ear cress).